The primary structure comprises 763 residues: Amine oxidase [copper-containing] 3 (763 aa).

The Cytoplasmic segment spans residues 1–6 (MNQKTT). A helical; Signal-anchor for type II membrane protein membrane pass occupies residues 7–27 (LVLLALAVITIFALVCVLIAG). Residues 28–763 (RGGDGGEASQ…AFSHGGFFTN (736 aa)) are Extracellular-facing. N137 is a glycosylation site (N-linked (GlcNAc...) asparagine). C198 and C199 form a disulfide bridge. N-linked (GlcNAc...) asparagine glycans are attached at residues N232 and N294. The Proton acceptor role is filled by D386. C404 and C430 are disulfide-bonded. The active-site Schiff-base intermediate with substrate; via topaquinone is the Y471. At Y471 the chain carries 2',4',5'-topaquinone. Cu(2+) is bound by residues H520 and H522. Ca(2+) contacts are provided by D529, L530, D531, and E572. N618 is a glycosylation site (N-linked (GlcNAc...) asparagine). Positions 641, 663, and 665 each coordinate Ca(2+). A glycan (N-linked (GlcNAc...) asparagine) is linked at N666. The Ca(2+) site is built by E667, D673, and L674. H684 lines the Cu(2+) pocket. Residues C734 and C741 are joined by a disulfide bond.

This sequence belongs to the copper/topaquinone oxidase family. Homodimer; disulfide-linked. Probably forms heterodimers with AOC2. The cofactor is Cu(2+). Ca(2+) serves as cofactor. It depends on L-topaquinone as a cofactor. In terms of processing, topaquinone (TPQ) is generated by copper-dependent autoxidation of a specific tyrosyl residue. Post-translationally, N- and O-glycosylated.

The protein localises to the cell membrane. It carries out the reaction methylamine + O2 + H2O = formaldehyde + H2O2 + NH4(+). It catalyses the reaction benzylamine + O2 + H2O = benzaldehyde + H2O2 + NH4(+). The enzyme catalyses 2-phenylethylamine + O2 + H2O = 2-phenylacetaldehyde + H2O2 + NH4(+). Its function is as follows. Catalyzes the oxidative deamination of primary amines to the corresponding aldehydes with the concomitant production of hydrogen peroxide and ammonia. Has a preference for the primary monoamines methylamine and benzylamine. Could also act on 2-phenylethylamine but much less efficiently. At endothelial cells surface can also function as a cell adhesion protein that participates in lymphocyte extravasation and recirculation by mediating the binding of lymphocytes to peripheral lymph node vascular endothelial cells in an L-selectin-independent fashion. The chain is Amine oxidase [copper-containing] 3 from Bos taurus (Bovine).